A 65-amino-acid chain; its full sequence is Large ribosomal subunit protein uL29 (65 aa).

The protein belongs to the universal ribosomal protein uL29 family.

The sequence is that of Large ribosomal subunit protein uL29 from Acidovorax ebreus (strain TPSY) (Diaphorobacter sp. (strain TPSY)).